The primary structure comprises 274 residues: Putative phosphoenolpyruvate synthase regulatory protein (274 aa).

Position 154–161 (154–161) interacts with ADP; sequence AVSRSGKT.

The protein belongs to the pyruvate, phosphate/water dikinase regulatory protein family. PSRP subfamily.

It carries out the reaction [pyruvate, water dikinase] + ADP = [pyruvate, water dikinase]-phosphate + AMP + H(+). It catalyses the reaction [pyruvate, water dikinase]-phosphate + phosphate + H(+) = [pyruvate, water dikinase] + diphosphate. Bifunctional serine/threonine kinase and phosphorylase involved in the regulation of the phosphoenolpyruvate synthase (PEPS) by catalyzing its phosphorylation/dephosphorylation. The polypeptide is Putative phosphoenolpyruvate synthase regulatory protein (Alkalilimnicola ehrlichii (strain ATCC BAA-1101 / DSM 17681 / MLHE-1)).